The primary structure comprises 554 residues: MAYYRTPHDVTALPAWQALKDHRQAMQDFSMREAFNADPQRFNQFTLSSCGLFLDYSKNLINAETRNLLVGLANEVDLKGAIKALFDGEIVNSSEGRPALHTALRRPVGDKLSVNGVNVMPEVHKVLNQITDLVGRIHDGLWRGYTEKPITDVVNIGIGGSFLGPELVSEALLSYAQKGVRCHYLANIDGSEFHELTQKLRAETTLFIVSSKSFNTLETLKNAQAARAWYLAQGGSEAELYRHFIAVSSNNAAAVAFGIREENIFPMWDWVGGRYSLWSAIGLPIALAIGMSNFKELLSGAYTMDQHFQSAPFEQNMPVLLALLGVWYGNFWGAQSHAILPYDHYLRNITKHLQQLDMESNGKSVRQDGTPVSTDTGPVIWGGVGCNGQHAYHQLLHQGTQLIPADFIVPIVSFNPVSDHHQWLYANCLSQSQALMLGKTLPEAEAELRDKGMSEDQVQKLAPHKVIPGNRPSNTLVVERISPRRLGALVAMYEHKVFVQSVVWGINAFDQWGVELGKELGKGVYNRLVGSEETAAEDASTQGLINYFRGRHRG.

Glutamate 359 serves as the catalytic Proton donor. Catalysis depends on residues histidine 390 and lysine 518.

The protein belongs to the GPI family.

It is found in the cytoplasm. It catalyses the reaction alpha-D-glucose 6-phosphate = beta-D-fructose 6-phosphate. The protein operates within carbohydrate biosynthesis; gluconeogenesis. Its pathway is carbohydrate degradation; glycolysis; D-glyceraldehyde 3-phosphate and glycerone phosphate from D-glucose: step 2/4. Catalyzes the reversible isomerization of glucose-6-phosphate to fructose-6-phosphate. The sequence is that of Glucose-6-phosphate isomerase from Pseudomonas fluorescens (strain Pf0-1).